A 391-amino-acid polypeptide reads, in one-letter code: Elongation factor Tu (391 aa).

In terms of domain architecture, tr-type G spans 10–201 (KPHVNIGTIG…AVDEYIPTPA (192 aa)). A G1 region spans residues 19–26 (GHVDHGKT). 19 to 26 (GHVDHGKT) lines the GTP pocket. Threonine 26 is a binding site for Mg(2+). Residues 55 to 59 (GITIS) form a G2 region. The G3 stretch occupies residues 76–79 (DCPG). GTP contacts are provided by residues 76-80 (DCPGH) and 131-134 (NKVD). Residues 131–134 (NKVD) are G4. The G5 stretch occupies residues 169–171 (SAL).

Belongs to the TRAFAC class translation factor GTPase superfamily. Classic translation factor GTPase family. EF-Tu/EF-1A subfamily. Monomer.

It localises to the cytoplasm. The catalysed reaction is GTP + H2O = GDP + phosphate + H(+). Its function is as follows. GTP hydrolase that promotes the GTP-dependent binding of aminoacyl-tRNA to the A-site of ribosomes during protein biosynthesis. The protein is Elongation factor Tu of Cereibacter sphaeroides (strain ATCC 17029 / ATH 2.4.9) (Rhodobacter sphaeroides).